The following is a 297-amino-acid chain: tRNA-cytidine(32) 2-sulfurtransferase (297 aa).

The PP-loop motif motif lies at 45–50; sequence SGGKDS. The [4Fe-4S] cluster site is built by Cys120, Cys123, and Cys211.

It belongs to the TtcA family. In terms of assembly, homodimer. Requires Mg(2+) as cofactor. It depends on [4Fe-4S] cluster as a cofactor.

It is found in the cytoplasm. The enzyme catalyses cytidine(32) in tRNA + S-sulfanyl-L-cysteinyl-[cysteine desulfurase] + AH2 + ATP = 2-thiocytidine(32) in tRNA + L-cysteinyl-[cysteine desulfurase] + A + AMP + diphosphate + H(+). Its pathway is tRNA modification. Functionally, catalyzes the ATP-dependent 2-thiolation of cytidine in position 32 of tRNA, to form 2-thiocytidine (s(2)C32). The sulfur atoms are provided by the cysteine/cysteine desulfurase (IscS) system. This Vibrio campbellii (strain ATCC BAA-1116) protein is tRNA-cytidine(32) 2-sulfurtransferase.